A 101-amino-acid chain; its full sequence is NAD(P)H-quinone oxidoreductase subunit 4L, chloroplastic (101 aa).

A run of 3 helical transmembrane segments spans residues 2 to 22 (YIEN…YGLL), 32 to 52 (MCLE…SNFI), and 61 to 81 (VIAI…LALV).

It belongs to the complex I subunit 4L family. As to quaternary structure, NDH is composed of at least 16 different subunits, 5 of which are encoded in the nucleus.

The protein resides in the plastid. It localises to the chloroplast thylakoid membrane. The enzyme catalyses a plastoquinone + NADH + (n+1) H(+)(in) = a plastoquinol + NAD(+) + n H(+)(out). It carries out the reaction a plastoquinone + NADPH + (n+1) H(+)(in) = a plastoquinol + NADP(+) + n H(+)(out). Functionally, NDH shuttles electrons from NAD(P)H:plastoquinone, via FMN and iron-sulfur (Fe-S) centers, to quinones in the photosynthetic chain and possibly in a chloroplast respiratory chain. The immediate electron acceptor for the enzyme in this species is believed to be plastoquinone. Couples the redox reaction to proton translocation, and thus conserves the redox energy in a proton gradient. This is NAD(P)H-quinone oxidoreductase subunit 4L, chloroplastic from Mesostigma viride (Green alga).